Consider the following 71-residue polypeptide: Brevinin-1E (71 aa).

Residues 1-22 form the signal peptide; that stretch reads MFTLKKSMLLLFFLGTINLSLC. Positions 23 to 45 are excised as a propeptide; it reads EEERDADEEERRDNPDESEVEVE. Cysteine 65 and cysteine 71 are disulfide-bonded.

This sequence belongs to the frog skin active peptide (FSAP) family. Brevinin subfamily. In terms of tissue distribution, expressed by the skin glands.

The protein localises to the secreted. Its function is as follows. Shows antibacterial activity against representative Gram-negative and Gram-positive bacterial species, and a very high hemolytic activity. The sequence is that of Brevinin-1E from Pelophylax lessonae (Pool frog).